A 341-amino-acid chain; its full sequence is Anthranilate phosphoribosyltransferase (341 aa).

5-phospho-alpha-D-ribose 1-diphosphate is bound by residues glycine 82, 85–86 (GD), threonine 90, 92–95 (NIST), 110–118 (KHGGRSVSG), and serine 122. Glycine 82 is a binding site for anthranilate. Position 94 (serine 94) interacts with Mg(2+). Arginine 168 serves as a coordination point for anthranilate. Mg(2+) contacts are provided by aspartate 227 and glutamate 228.

The protein belongs to the anthranilate phosphoribosyltransferase family. In terms of assembly, homodimer. The cofactor is Mg(2+).

The catalysed reaction is N-(5-phospho-beta-D-ribosyl)anthranilate + diphosphate = 5-phospho-alpha-D-ribose 1-diphosphate + anthranilate. It functions in the pathway amino-acid biosynthesis; L-tryptophan biosynthesis; L-tryptophan from chorismate: step 2/5. In terms of biological role, catalyzes the transfer of the phosphoribosyl group of 5-phosphorylribose-1-pyrophosphate (PRPP) to anthranilate to yield N-(5'-phosphoribosyl)-anthranilate (PRA). This chain is Anthranilate phosphoribosyltransferase, found in Nitrosomonas europaea (strain ATCC 19718 / CIP 103999 / KCTC 2705 / NBRC 14298).